Here is a 276-residue protein sequence, read N- to C-terminus: Small ribosomal subunit protein uS2 (276 aa).

Belongs to the universal ribosomal protein uS2 family.

The protein is Small ribosomal subunit protein uS2 of Chlamydia abortus (strain DSM 27085 / S26/3) (Chlamydophila abortus).